A 196-amino-acid chain; its full sequence is Imidazoleglycerol-phosphate dehydratase (196 aa).

It belongs to the imidazoleglycerol-phosphate dehydratase family.

It is found in the cytoplasm. It carries out the reaction D-erythro-1-(imidazol-4-yl)glycerol 3-phosphate = 3-(imidazol-4-yl)-2-oxopropyl phosphate + H2O. It functions in the pathway amino-acid biosynthesis; L-histidine biosynthesis; L-histidine from 5-phospho-alpha-D-ribose 1-diphosphate: step 6/9. The sequence is that of Imidazoleglycerol-phosphate dehydratase from Dehalococcoides mccartyi (strain CBDB1).